A 957-amino-acid polypeptide reads, in one-letter code: Kinesin heavy chain isoform 5C (957 aa).

The Kinesin motor domain maps to 8–327; the sequence is SIKVMCRFRP…LMFGQRAKTI (320 aa). Positions 87, 89, 90, 91, 92, 93, 94, and 99 each coordinate ATP. A microtubule-binding region spans residues 174 to 315; sequence VSSPEEVMDV…PSVFNEAETK (142 aa). Residues 406-923 are a coiled coil; sequence VAGISTEEKE…ARRAHSAQIA (518 aa). The segment at 859 to 956 is globular; that stretch reads RCELPKLEKR…GSSSNSTHYQ (98 aa). The disordered stretch occupies residues 911–957; it reads KNMARRAHSAQIAKPIRPGHYPASSPTAVHAIRGGGGSSSNSTHYQK.

It belongs to the TRAFAC class myosin-kinesin ATPase superfamily. Kinesin family. Kinesin subfamily. Oligomer composed of two heavy chains and two light chains. Interacts with GRIP1 and KLC3. Interacts with TRAK1. Interacts with ZFYVE27. Highest expression in brain, prostate and testis, and moderate expression in kidney, small intestine and ovary.

It localises to the cytoplasm. Its subcellular location is the cytoskeleton. It is found in the cell projection. The protein localises to the dendrite. The enzyme catalyses ATP + H2O = ADP + phosphate + H(+). Microtubule-associated force-producing protein that may play a role in organelle transport. Has ATPase activity. Involved in synaptic transmission. Mediates dendritic trafficking of mRNAs. Required for anterograde axonal transportation of MAPK8IP3/JIP3 which is essential for MAPK8IP3/JIP3 function in axon elongation. This chain is Kinesin heavy chain isoform 5C (KIF5C), found in Homo sapiens (Human).